We begin with the raw amino-acid sequence, 205 residues long: Thymidylate kinase (205 aa).

10-17 (GIDGAGKT) serves as a coordination point for ATP.

It belongs to the thymidylate kinase family.

It carries out the reaction dTMP + ATP = dTDP + ADP. Its function is as follows. Phosphorylation of dTMP to form dTDP in both de novo and salvage pathways of dTTP synthesis. The sequence is that of Thymidylate kinase from Nitrosospira multiformis (strain ATCC 25196 / NCIMB 11849 / C 71).